The primary structure comprises 243 residues: 1-(5-phosphoribosyl)-5-[(5-phosphoribosylamino)methylideneamino] imidazole-4-carboxamide isomerase (243 aa).

The active-site Proton acceptor is the Asp10. Catalysis depends on Asp128, which acts as the Proton donor.

Belongs to the HisA/HisF family.

Its subcellular location is the cytoplasm. The enzyme catalyses 1-(5-phospho-beta-D-ribosyl)-5-[(5-phospho-beta-D-ribosylamino)methylideneamino]imidazole-4-carboxamide = 5-[(5-phospho-1-deoxy-D-ribulos-1-ylimino)methylamino]-1-(5-phospho-beta-D-ribosyl)imidazole-4-carboxamide. It functions in the pathway amino-acid biosynthesis; L-histidine biosynthesis; L-histidine from 5-phospho-alpha-D-ribose 1-diphosphate: step 4/9. The polypeptide is 1-(5-phosphoribosyl)-5-[(5-phosphoribosylamino)methylideneamino] imidazole-4-carboxamide isomerase (Helicobacter hepaticus (strain ATCC 51449 / 3B1)).